The following is a 245-amino-acid chain: Photosystem II protein PSBS1 (245 aa).

A chloroplast-targeting transit peptide spans 1–25 (MAMTLSTKAFAQRGVSARKNTVRVY). The next 4 membrane-spanning stretches (helical) occupy residues 72–92 (LFVG…EILT), 108–128 (GIEV…AAVL), 185–205 (LGFA…LAQF), and 217–237 (EFGL…EGSG).

Belongs to the ELIP/psbS family.

The protein resides in the plastid. It localises to the chloroplast thylakoid membrane. In terms of biological role, required for non-photochemical quenching (NPQ), a mechanism that converts and dissipates the harmful excess absorbed light energy into heat and protect the photosynthetic apparatus from photo-oxidative damage. Seems involved in the activation of NPQ, possibly by promoting conformational changes required for activation of LHCSR3-dependent quenching in the antenna of photosystem II (PSII). The polypeptide is Photosystem II protein PSBS1 (Chlamydomonas reinhardtii (Chlamydomonas smithii)).